Consider the following 294-residue polypeptide: MAMETQDIIKRSATNSITPPSQVRDYKAEVAKLIDVSTCIGCKACQVACSEWNDIRDEVGHCVGVYDNPADLSAKSWTVMRFSETEQNGKLEWLIRKDGCMHCEDPGCLKACPSAGAIIQYANGIVDFQSENCIGCGYCIAGCPFNIPRLNKEDNRVYKCTLCVDRVSVGQEPACVKTCPTGAIHFGTKKEMLELAEQRVAKLKARGYEHAGVYNPEGVGGTHVMYVLHHADQPELYHGLPKDPKIDTSVSLWKGALKPLAAAGFIATFAGLIFHYIGIGPNKEVDDDEEDHHE.

At 1–256 (MAMETQDIIK…DTSVSLWKGA (256 aa)) the chain is on the periplasmic side. 4 4Fe-4S ferredoxin-type domains span residues 30 to 58 (VAKL…IRDE), 91 to 123 (LEWL…QYAN), 124 to 153 (GIVD…LNKE), and 158 to 189 (YKCT…FGTK). The [4Fe-4S] cluster site is built by cysteine 39, cysteine 42, cysteine 45, cysteine 49, cysteine 100, cysteine 103, cysteine 108, cysteine 112, cysteine 133, cysteine 136, cysteine 139, cysteine 143, cysteine 160, cysteine 163, cysteine 175, and cysteine 179. A helical transmembrane segment spans residues 257 to 279 (LKPLAAAGFIATFAGLIFHYIGI). Over 280-294 (GPNKEVDDDEEDHHE) the chain is Cytoplasmic.

In terms of assembly, trimer of heterotrimers, consisting of subunits alpha, beta and gamma. Requires [4Fe-4S] cluster as cofactor.

It localises to the cell inner membrane. Functionally, formate dehydrogenase allows E.coli to use formate as major electron donor during anaerobic respiration, when nitrate is used as electron acceptor. The beta subunit FdnH is an electron transfer unit containing 4 iron-sulfur clusters; it serves as a conduit for electrons that are transferred from the formate oxidation site in the alpha subunit (FdnG) to the menaquinone associated with the gamma subunit (FdnI) of formate dehydrogenase-N. Formate dehydrogenase-N is part of a system that generates proton motive force, together with the dissimilatory nitrate reductase (Nar). This Escherichia coli (strain K12) protein is Formate dehydrogenase, nitrate-inducible, iron-sulfur subunit (fdnH).